The following is a 560-amino-acid chain: Membrane protein insertase YidC (560 aa).

Helical transmembrane passes span 5 to 25 (IINL…WQYF), 334 to 354 (AIDF…MNFF), 357 to 377 (YVGN…LLMF), 431 to 451 (LPIL…YVTI), 476 to 496 (LFGL…WPIL), and 522 to 542 (FMPL…LIYW).

Belongs to the OXA1/ALB3/YidC family. Type 1 subfamily. In terms of assembly, interacts with the Sec translocase complex via SecD. Specifically interacts with transmembrane segments of nascent integral membrane proteins during membrane integration.

It localises to the cell inner membrane. Required for the insertion and/or proper folding and/or complex formation of integral membrane proteins into the membrane. Involved in integration of membrane proteins that insert both dependently and independently of the Sec translocase complex, as well as at least some lipoproteins. Aids folding of multispanning membrane proteins. In Rickettsia akari (strain Hartford), this protein is Membrane protein insertase YidC.